Here is a 98-residue protein sequence, read N- to C-terminus: NADH-ubiquinone oxidoreductase chain 4L (98 aa).

3 helical membrane passes run 1-21, 28-48, and 59-79; these read MMPINLNLIMAFSLALIGALV, STLLCLEGMMLSLFIQMALLI, and APLILLVFSACEAGLGLALLV.

It belongs to the complex I subunit 4L family. In terms of assembly, core subunit of respiratory chain NADH dehydrogenase (Complex I) which is composed of 45 different subunits.

Its subcellular location is the mitochondrion inner membrane. The enzyme catalyses a ubiquinone + NADH + 5 H(+)(in) = a ubiquinol + NAD(+) + 4 H(+)(out). In terms of biological role, core subunit of the mitochondrial membrane respiratory chain NADH dehydrogenase (Complex I) which catalyzes electron transfer from NADH through the respiratory chain, using ubiquinone as an electron acceptor. Part of the enzyme membrane arm which is embedded in the lipid bilayer and involved in proton translocation. The chain is NADH-ubiquinone oxidoreductase chain 4L (MT-ND4L) from Distoechurus pennatus (Feather-tailed possum).